The following is a 591-amino-acid chain: MAAQVSHTVLRLEAEDVRNLKDGINFQKNNKDGKCYIIYKANGELRACRNQCKHQGGLFIKDIEDMDGRTVRCTKHYWKLNVATMQYVNPPDSFMQDELEAVLSETDGSLELLELNPPDPWTAEPREAQDLQAGEITLTYITHACMELKAGERRMMFDPWLTGPAFARGWWLLHEPPKDAMDRLMEADLVYISHMHSDHLSYPTLQHLSKKRPDIPIYVGNTSRPVFWYLEKSGVNLTNINVVPFGVWQNVDDHLRFMILMDGVHPEMDTCLIVEYKGHMILNTVDCTRPNNGRLPHGVDVMMSDFAGGASGFPMTFHGGKYTESWKANFIKNERKKLLNYKAQLVKSLQPKIYCPFAGYFTEAHPSDRYIKETNTKNSPAELNELIRKSCLNTLTWTPLPGSVLDLAVALNNRSNETAITDPPHGTKIYKDNWEFDLYLNQLNASISAEIFKHKHWIQYYYNWAGFRNYNLVIRVIETDDDFQPLNGGFDYLVDFLDLSFPTERPEREHAYEEIKNRVNVMRHVVVNGLLWDDLYIGFNNRMSRDPDVYHHKFWNHFQTELPLSAPDWQHFLQICSQTQENGSSNGCSVS.

The Rieske domain maps to 12-110 (LEAEDVRNLK…AVLSETDGSL (99 aa)). Positions 52, 54, 73, and 76 each coordinate [2Fe-2S] cluster.

It belongs to the CMP-Neu5Ac hydroxylase family. [2Fe-2S] cluster serves as cofactor.

The protein resides in the cytoplasm. It catalyses the reaction CMP-N-acetyl-beta-neuraminate + 2 Fe(II)-[cytochrome b5] + O2 + 2 H(+) = CMP-N-glycoloyl-beta-neuraminate + 2 Fe(III)-[cytochrome b5] + H2O. It functions in the pathway amino-sugar metabolism; N-acetylneuraminate metabolism. In terms of biological role, sialic acids are components of carbohydrate chains of glycoconjugates and are involved in cell-cell recognition and cell-pathogen interactions. Catalyzes the conversion of CMP-N-acetylneuraminic acid (CMP-Neu5Ac) into its hydroxylated derivative CMP-N-glycolylneuraminic acid (CMP-Neu5Gc), a sialic acid abundantly expressed at the surface of many cells. This Danio rerio (Zebrafish) protein is Cytidine monophosphate-N-acetylneuraminic acid hydroxylase (cmah).